The chain runs to 209 residues: ATP phosphoribosyltransferase (209 aa).

This sequence belongs to the ATP phosphoribosyltransferase family. Short subfamily. Heteromultimer composed of HisG and HisZ subunits.

The protein localises to the cytoplasm. It catalyses the reaction 1-(5-phospho-beta-D-ribosyl)-ATP + diphosphate = 5-phospho-alpha-D-ribose 1-diphosphate + ATP. Its pathway is amino-acid biosynthesis; L-histidine biosynthesis; L-histidine from 5-phospho-alpha-D-ribose 1-diphosphate: step 1/9. In terms of biological role, catalyzes the condensation of ATP and 5-phosphoribose 1-diphosphate to form N'-(5'-phosphoribosyl)-ATP (PR-ATP). Has a crucial role in the pathway because the rate of histidine biosynthesis seems to be controlled primarily by regulation of HisG enzymatic activity. This Sulfurimonas denitrificans (strain ATCC 33889 / DSM 1251) (Thiomicrospira denitrificans (strain ATCC 33889 / DSM 1251)) protein is ATP phosphoribosyltransferase.